A 1029-amino-acid chain; its full sequence is uncharacterized protein (1029 aa).

Over residues 1–23 the composition is skewed to basic and acidic residues; sequence MREWCMLRESRTNTPRRAAERGK. The interval 1–31 is disordered; the sequence is MREWCMLRESRTNTPRRAAERGKRPGGSSVR. Positions 39 to 168 constitute a Guanylate cyclase domain; sequence TALCYDLVGS…AALAMAARLQ (130 aa). An ATP-binding site is contributed by 261-268; the sequence is GDAGIGKS.

This is an uncharacterized protein from Rhizobium meliloti (strain 1021) (Ensifer meliloti).